A 255-amino-acid chain; its full sequence is NADPH-dependent FMN reductase ArsH (255 aa).

43–50 provides a ligand contact to FMN; it reads SLRARSFS.

This sequence belongs to the ArsH family. As to quaternary structure, homotetramer. The cofactor is FMN.

Has NADPH-dependent FMN reductase activity and very low azoreductase activity. No activity with NADH. The chain is NADPH-dependent FMN reductase ArsH from Shigella flexneri.